The sequence spans 673 residues: MNDQGIKESIETLKEQIRKYDYHYYVLDEPLVPDAEYDRCFKALQQYEEQYPQFLSPDSPTQRVSGTPSDAFMPVAHKQPMLSLSNVFTTDELKAFIKRAIEKLDEPNQQLVFACEPKLDGLAVNMTYEGGILTHAATRGDGAVGENITANIKTIASVPLRLRVSNPPKLIEVRGEVYIPKADFEAYNARARELGEKTFANPRNAAAGSLRQLNPEISASRPLAIYCYGIGACEDYKLPNSHLEQLNLLKEFGFRVSPETRRAVGIEGCLDYYQYMLAKRNQLPFEIDGVVYKIDSISLQQQLGYVSRAPRFACAHKFPATEEMTRLIAVDFQVGRTGAVTPVARLEPVSVGGVTVSNATLHNFDEITRKDIRIGDTVIIRRAGDVIPEVVSVILEKRPANARMIELPKNCPVCGSEVVREADEAIARCVGGLYCKAQLKRMMWHFASRKAMYIEGLGSVLIDQLVDEGIVHHLADLYELDLQTLASLPRMGEKSAKNLLSALEKSKKTTFNRFLYALGIREIGEAGARVLAEHYCDVEGLKAATIEELMTLNDIGPVAASHVVHFFAQAHNLEVIDRLLELGIHWPKSEKIQVNQQNPFFGKTVVLTGTLSTMGREEAKAKLLALGAKVSGSVSSKTDYVVAGSEAGSKLIKATELGVAIIEEDEFLKWVNS.

Residues 34 to 38 (DAEYD), 83 to 84 (SL), and Glu116 contribute to the NAD(+) site. The active-site N6-AMP-lysine intermediate is the Lys118. 4 residues coordinate NAD(+): Arg139, Glu176, Lys293, and Lys317. Zn(2+) contacts are provided by Cys411, Cys414, Cys429, and Cys435. The BRCT domain maps to 595–673 (NQQNPFFGKT…EDEFLKWVNS (79 aa)).

The protein belongs to the NAD-dependent DNA ligase family. LigA subfamily. Requires Mg(2+) as cofactor. The cofactor is Mn(2+).

The enzyme catalyses NAD(+) + (deoxyribonucleotide)n-3'-hydroxyl + 5'-phospho-(deoxyribonucleotide)m = (deoxyribonucleotide)n+m + AMP + beta-nicotinamide D-nucleotide.. DNA ligase that catalyzes the formation of phosphodiester linkages between 5'-phosphoryl and 3'-hydroxyl groups in double-stranded DNA using NAD as a coenzyme and as the energy source for the reaction. It is essential for DNA replication and repair of damaged DNA. This Legionella pneumophila (strain Lens) protein is DNA ligase.